Reading from the N-terminus, the 583-residue chain is MTRESAVATKRNWAILAAGVGLVYVLVRHRHRLLCPLRRVWSFGSLVPQRRIEVINSVQDPTTQWVLNELKNHCQTFKVLGFDCEWITVGGSRRPVALLQLSSHRGLCALFRLCHMKQIPQDLRELLEDDSVIKVGVAPQEDAMKLSHDYGVGVASTLDLRFLCVMAGHKPEGLGKLSKTHLNYTLDKHWRLACSNWEAKTLEPKQLDYAANDALMAVAIYQKLCRDLQPKHFWQRRQLDDNSMHNKFEPFLDVDFTKGFTLNPSGSGVTRSKGSTQSKSNKWVPKKQPYRQIATRTKDFYDNCLLQAPDGELLCTIDRRKASWYLNQNLGTHISEEPFTVRLNFEPAGRAVGDVGRFYQTIKKNQCVVCGDRDAYIRKNVVPREYRKHFPLVMKSHTSDDVLLLCPTCHQLSNISDLRVRSKLAVQCEAPFKQEDGSVKYHDDPQLKRVQSAGKALLHHGAKIPAAKKAEMEKTLLDYYSDQTDITEDLLRQAASVEYRVENSDYCQHGERVVQQYRDHFGGLVELERLWRQHFLHTMQPRFLPELWNVNHNADRLEVRASEGRIDKADLMVAGLDAKIKET.

Topologically, residues 1–11 are mitochondrial intermembrane; the sequence is MTRESAVATKR. A helical membrane pass occupies residues 12-29; sequence NWAILAAGVGLVYVLVRH. Residues 30–583 are Cytoplasmic-facing; sequence RHRLLCPLRR…AGLDAKIKET (554 aa). The 167-residue stretch at 62 to 228 folds into the 3'-5' exonuclease domain; that stretch reads TTQWVLNELK…AIYQKLCRDL (167 aa). Residues aspartate 83, glutamate 85, and aspartate 213 each coordinate a divalent metal cation. The segment covering 266–281 has biased composition (polar residues); it reads GSGVTRSKGSTQSKSN. Residues 266 to 286 form a disordered region; sequence GSGVTRSKGSTQSKSNKWVPK.

This sequence belongs to the EXD2 family. As to quaternary structure, homodimer. The cofactor is Mg(2+). Requires Mn(2+) as cofactor.

It is found in the mitochondrion membrane. Functionally, 3'-5' exoribonuclease required for mitochondrial metabolism. In Drosophila melanogaster (Fruit fly), this protein is Exonuclease 3'-5' domain-containing protein 2.